The sequence spans 577 residues: 5'-nucleotidase (577 aa).

An N-terminal signal peptide occupies residues 1-30; sequence MPRVPSASATGSSALLSLLCAFSLGRAAPF. Aspartate 39, histidine 41, aspartate 86, and asparagine 118 together coordinate Zn(2+). Asparagine 135 carries an N-linked (GlcNAc...) asparagine glycan. 2 residues coordinate Zn(2+): histidine 221 and histidine 244. A substrate-binding site is contributed by asparagine 246. 2 N-linked (GlcNAc...) asparagine glycosylation sites follow: asparagine 311 and asparagine 347. 2 disulfides stabilise this stretch: cysteine 353–cysteine 358 and cysteine 365–cysteine 387. Residue arginine 354 coordinates substrate. Residues glutamine 390 and arginine 395 each contribute to the substrate site. An N-linked (GlcNAc...) asparagine glycan is attached at asparagine 403. Substrate is bound at residue phenylalanine 417. A disulfide bond links cysteine 476 and cysteine 479. 500–506 contacts substrate; that stretch reads YIAEGGD. The GPI-anchor amidated serine moiety is linked to residue serine 552. Positions 553 to 577 are cleaved as a propeptide — removed in mature form; that stretch reads ATLPIINLKIGLSLFAFLTWFLHCS.

Belongs to the 5'-nucleotidase family. In terms of assembly, homodimer. Zn(2+) is required as a cofactor.

Its subcellular location is the cell membrane. It carries out the reaction a ribonucleoside 5'-phosphate + H2O = a ribonucleoside + phosphate. Functionally, hydrolyzes extracellular nucleotides into membrane permeable nucleosides. This is 5'-nucleotidase from Diplobatis ommata (Ocellated electric ray).